We begin with the raw amino-acid sequence, 86 residues long: MAHKKAMGSTENTRDSNPSYLGVKSYGGEHVHAGSIIVRQRGTKFHPGHNVGRGSDDTLFAKDHGVVKFARSGGDRKYVHVVPEEA.

The interval methionine 1–lysine 24 is disordered. The span at serine 9 to serine 19 shows a compositional bias: polar residues.

It belongs to the bacterial ribosomal protein bL27 family.

The polypeptide is Large ribosomal subunit protein bL27 (Salinibacter ruber (strain DSM 13855 / M31)).